We begin with the raw amino-acid sequence, 336 residues long: GTPase Obg (336 aa).

One can recognise an Obg domain in the interval 1–159 (MKFVDSATVF…LELAMELKLM (159 aa)). The interval 120 to 143 (GGHGGRGNQHFATSTNQAPRRSEP) is disordered. Over residues 129–138 (HFATSTNQAP) the composition is skewed to polar residues. In terms of domain architecture, OBG-type G spans 160–323 (ADVGLVGFPN…LKDELWRQVS (164 aa)). GTP is bound by residues 166-173 (GFPNAGKS), 191-195 (FTTLV), 213-216 (DIPG), 280-283 (TKMD), and 304-306 (SSV). Residues serine 173 and threonine 193 each contribute to the Mg(2+) site.

It belongs to the TRAFAC class OBG-HflX-like GTPase superfamily. OBG GTPase family. Monomer. Mg(2+) is required as a cofactor.

The protein resides in the cytoplasm. In terms of biological role, an essential GTPase which binds GTP, GDP and possibly (p)ppGpp with moderate affinity, with high nucleotide exchange rates and a fairly low GTP hydrolysis rate. Plays a role in control of the cell cycle, stress response, ribosome biogenesis and in those bacteria that undergo differentiation, in morphogenesis control. The sequence is that of GTPase Obg from Chlorobium phaeovibrioides (strain DSM 265 / 1930) (Prosthecochloris vibrioformis (strain DSM 265)).